The primary structure comprises 127 residues: Aspartate 1-decarboxylase (127 aa).

Residue serine 25 is the Schiff-base intermediate with substrate; via pyruvic acid of the active site. Serine 25 carries the post-translational modification Pyruvic acid (Ser). Position 57 (threonine 57) interacts with substrate. The Proton donor role is filled by tyrosine 58. 73–75 (GAA) is a binding site for substrate.

The protein belongs to the PanD family. Heterooctamer of four alpha and four beta subunits. Pyruvate is required as a cofactor. Post-translationally, is synthesized initially as an inactive proenzyme, which is activated by self-cleavage at a specific serine bond to produce a beta-subunit with a hydroxyl group at its C-terminus and an alpha-subunit with a pyruvoyl group at its N-terminus.

It localises to the cytoplasm. The enzyme catalyses L-aspartate + H(+) = beta-alanine + CO2. Its pathway is cofactor biosynthesis; (R)-pantothenate biosynthesis; beta-alanine from L-aspartate: step 1/1. Its function is as follows. Catalyzes the pyruvoyl-dependent decarboxylation of aspartate to produce beta-alanine. The polypeptide is Aspartate 1-decarboxylase (Bacillus pumilus (strain SAFR-032)).